Consider the following 487-residue polypeptide: Protein SMG9 (487 aa).

Disordered regions lie at residues 30 to 83 (EDAA…PPAL) and 136 to 164 (RDKG…LQPP). Over residues 42 to 70 (LKKDRDREQETWDRERDKDRKLERDREAE) the composition is skewed to basic and acidic residues.

This sequence belongs to the SMG9 family.

Its function is as follows. Involved in nonsense-mediated decay (NMD) of mRNAs containing premature stop codons. Probable component of kinase complex containing nonC and recruited to stalled ribosomes. The chain is Protein SMG9 from Drosophila melanogaster (Fruit fly).